The following is a 162-amino-acid chain: UPF0303 protein Arad_3071 (162 aa).

This sequence belongs to the UPF0303 family.

The sequence is that of UPF0303 protein Arad_3071 from Rhizobium rhizogenes (strain K84 / ATCC BAA-868) (Agrobacterium radiobacter).